The chain runs to 215 residues: Probable transaldolase (215 aa).

Lys-83 acts as the Schiff-base intermediate with substrate in catalysis.

Belongs to the transaldolase family. Type 3B subfamily.

It is found in the cytoplasm. The catalysed reaction is D-sedoheptulose 7-phosphate + D-glyceraldehyde 3-phosphate = D-erythrose 4-phosphate + beta-D-fructose 6-phosphate. It functions in the pathway carbohydrate degradation; pentose phosphate pathway; D-glyceraldehyde 3-phosphate and beta-D-fructose 6-phosphate from D-ribose 5-phosphate and D-xylulose 5-phosphate (non-oxidative stage): step 2/3. Functionally, transaldolase is important for the balance of metabolites in the pentose-phosphate pathway. The protein is Probable transaldolase of Methanococcus maripaludis (strain C7 / ATCC BAA-1331).